The following is a 354-amino-acid chain: Uroporphyrinogen decarboxylase (354 aa).

Substrate is bound by residues arginine 25 to arginine 29, aspartate 75, tyrosine 152, threonine 207, and histidine 330.

This sequence belongs to the uroporphyrinogen decarboxylase family. Homodimer.

The protein resides in the cytoplasm. It carries out the reaction uroporphyrinogen III + 4 H(+) = coproporphyrinogen III + 4 CO2. It participates in porphyrin-containing compound metabolism; protoporphyrin-IX biosynthesis; coproporphyrinogen-III from 5-aminolevulinate: step 4/4. Functionally, catalyzes the decarboxylation of four acetate groups of uroporphyrinogen-III to yield coproporphyrinogen-III. This chain is Uroporphyrinogen decarboxylase, found in Xanthomonas oryzae pv. oryzae (strain MAFF 311018).